The chain runs to 291 residues: Acidic endochitinase (291 aa).

Positions 1 to 22 (MIKYSFLLTALVLFLRALKLEA) are cleaved as a signal peptide. The GH18 domain occupies 23–291 (GDIVIYWGQN…GYSSAIKANV (269 aa)). Disulfide bonds link C42–C89 and C72–C79. E149 functions as the Proton donor in the catalytic mechanism. C180 and C209 are oxidised to a cystine.

It belongs to the glycosyl hydrolase 18 family. Chitinase class II subfamily.

The protein localises to the secreted. It is found in the cell wall. It carries out the reaction Random endo-hydrolysis of N-acetyl-beta-D-glucosaminide (1-&gt;4)-beta-linkages in chitin and chitodextrins.. Its function is as follows. This protein functions as a defense against chitin containing fungal pathogens. The polypeptide is Acidic endochitinase (Nicotiana tabacum (Common tobacco)).